Consider the following 279-residue polypeptide: Urease accessory protein UreD (279 aa).

It belongs to the UreD family. As to quaternary structure, ureD, UreF and UreG form a complex that acts as a GTP-hydrolysis-dependent molecular chaperone, activating the urease apoprotein by helping to assemble the nickel containing metallocenter of UreC. The UreE protein probably delivers the nickel.

The protein resides in the cytoplasm. In terms of biological role, required for maturation of urease via the functional incorporation of the urease nickel metallocenter. This is Urease accessory protein UreD from Streptococcus thermophilus (strain CNRZ 1066).